The sequence spans 502 residues: Dynein regulatory complex subunit 2 (502 aa).

2 coiled-coil regions span residues 96–160 (DSVI…RKAI) and 252–285 (EKSSKEIEVQMKKIQRLQEAISALKGKIVAHSRE).

It belongs to the DRC2 family. As to quaternary structure, component of the nexin-dynein regulatory complex (N-DRC). Interacts with DRC1.

It localises to the cytoplasm. Its subcellular location is the cytoskeleton. It is found in the flagellum basal body. The protein localises to the cell projection. The protein resides in the cilium. It localises to the flagellum. Its subcellular location is the flagellum axoneme. Component of the nexin-dynein regulatory complex (N-DRC), a key regulator of ciliary/flagellar motility which maintains the alignment and integrity of the distal axoneme and regulates microtubule sliding in motile axonemes. Plays a critical role in the assembly of N-DRC and also stabilizes the assembly of multiple inner dynein arms and radial spokes. Coassembles with DRC1 to form a central scaffold needed for assembly of the N-DRC and its attachment to the outer doublet microtubules. The sequence is that of Dynein regulatory complex subunit 2 (Ccdc65) from Rattus norvegicus (Rat).